Here is a 1151-residue protein sequence, read N- to C-terminus: MDEPPFTEAALEQALAEPCELDAALLTDIEDMLQLINNQDSDFPGLFDAPYAGVAGGTDPTSPDASSPGSPTPPPSTMSSPLEGFLGGARTPPPPPVSPTQPAPTPLKMYPSVPAFSPGPGIKEEPVPLTILQPPTPQPLSGALLPQSLPALAPPQLSPAPVLGYPSPPGSFSSATPPGSTSQTLPGLPLASLPGVLPVSVHTQVQSAAPQQLLTATATPVVSPGTTTVTSQIQQVPVLLQPHFIKADSLLLTTMKTDMGTPVKAAGIGSLAPGTAVQAAPLQTLVSGGTILATVPLVVDTDKLPINRLAAGGKALSSGQSRGEKRTAHNAIEKRYRSSINDKIIELKDLVVGTEAKLNKSAVLRKAIDYIRFLQQSNQKLKQENLSLRTAAHKSKSLKDLVSCSSGGRTDVPMEGVKPEVVDTLSPPPSDAGSPSQSSPLSLGSRGSSSGGSGSDSEPDSPVFEDSQMKPEQLPAPHGRGMLDRSRLALCVLVFLCLSCNPLASLMGSWALPGPSDATSAYHGPWRSVLGAEGRDGPGWVLWLLPPLVWLTNGLLVLLFLALLFVYGEPVTRPHSDPAVRFWRHRKQADLDLARGDFAQAAQQLWLALRALGRPLPTSHLDLACSLLWNLIRHLLQRLWVGRWLAGRAGGLRRDSALEADTRTSACDAALVYHKLHQLHTMGKYPGGHLDAANLALSALNLAECAGDALSVAVLAEVYVAAALRVKTSLPRALHFLTRFFLSSARQACLAQSGSVPVAMQWLCHPVGHRFFVDGDWAVCGAPRDSLYSVAGNPVDPLAQVTQLFREHLLEQALHCVAQPSPGPGSADGDREFSEALGFLQLLNSCCDTAGAPACSFSIASSTAATAGTDPVAKWWASLTAVVTHWLGRDEEAAERLYPLVEHLPRALQESERPLPRAALHSFKAARALLGRGKAESGSASLAMCEKASGYLQDSLAATPAGSSIDKAMQLLLCDLLLVARTSLWQRQKPPPPSQASQGSSSGAQASALELRGFQRDLSGLRRLAQSFRPAMRRVFLHEATARLMAGASPARTHQLLDRSLRRRAGPCGRGGAAAAAAAELEPRPTRREQAEALLLASCYLPPGFLSAPGQRVGMLAEAARTLEKLGDRRLLHDCQQMLMRLGGGTTVTSS.

Residues 1–59 are transcriptional activation (acidic); sequence MDEPPFTEAALEQALAEPCELDAALLTDIEDMLQLINNQDSDFPGLFDAPYAGVAGGTD. The Cytoplasmic segment spans residues 1 to 487; that stretch reads MDEPPFTEAA…HGRGMLDRSR (487 aa). The 9aaTAD signature appears at 27–35; the sequence is TDIEDMLQL. Disordered regions lie at residues 39-125 and 164-184; these read QDSD…IKEE and GYPS…TSQT. Low complexity predominate over residues 57 to 69; it reads GTDPTSPDASSPG. A compositionally biased stretch (pro residues) spans 91–105; that stretch reads TPPPPPVSPTQPAPT. A phosphoserine mark is found at Ser98 and Ser117. The span at 170–184 shows a compositional bias: polar residues; it reads GSFSSATPPGSTSQT. Residues 234–497 are interaction with LMNA; that stretch reads QQVPVLLQPH…LALCVLVFLC (264 aa). Residues 324–374 form the bHLH domain; the sequence is EKRTAHNAIEKRYRSSINDKIIELKDLVVGTEAKLNKSAVLRKAIDYIRFL. A phosphoserine; by SIK1 mark is found at Ser338 and Ser339. A leucine-zipper region spans residues 374–396; that stretch reads LQQSNQKLKQENLSLRTAAHKSK. A Phosphoserine; by AMPK modification is found at Ser397. The interval 399–479 is disordered; sequence KDLVSCSSGG…KPEQLPAPHG (81 aa). Phosphoserine; by SIK1 is present on Ser403. Residues 431–448 are compositionally biased toward low complexity; that stretch reads DAGSPSQSSPLSLGSRGS. Ser457 carries the post-translational modification Phosphoserine. The chain crosses the membrane as a helical span at residues 488 to 508; it reads LALCVLVFLCLSCNPLASLMG. Residues 509-547 are Lumenal-facing; that stretch reads SWALPGPSDATSAYHGPWRSVLGAEGRDGPGWVLWLLPP. Residues 548 to 568 form a helical membrane-spanning segment; the sequence is LVWLTNGLLVLLFLALLFVYG. The Cytoplasmic portion of the chain corresponds to 569 to 1151; that stretch reads EPVTRPHSDP…LGGGTTVTSS (583 aa). The segment at 987-1006 is disordered; that stretch reads RQKPPPPSQASQGSSSGAQA. Residues 995–1006 show a composition bias toward low complexity; that stretch reads QASQGSSSGAQA. Position 1060 is a phosphoserine (Ser1060).

Belongs to the SREBP family. As to quaternary structure, efficient DNA binding of the soluble transcription factor fragment requires dimerization with another bHLH protein. Interacts with CEBPA, the interaction produces a transcriptional synergy. Interacts with LMNA. Forms a tight complex with SCAP, the SCAP-SREBP complex, in the endoplasmic reticulum membrane and the Golgi apparatus. Interacts with PAQR3; the interaction anchors the SCAP-SREBP complex to the Golgi apparatus in low cholesterol conditions. In terms of processing, processed in the Golgi apparatus, releasing the protein from the membrane. At low cholesterol the SCAP-SREBP complex is recruited into COPII vesicles for export from the endoplasmic reticulum. In the Golgi, complex SREBPs are cleaved sequentially by site-1 (MBTPS1, S1P) and site-2 (MBTPS2, S2P) proteases. The first cleavage by site-1 protease occurs within the luminal loop, the second cleavage by site-2 protease occurs within the first transmembrane domain, releasing the transcription factor from the Golgi membrane. Post-translationally, phosphorylated by AMPK, leading to suppress protein processing and nuclear translocation, and repress target gene expression. Phosphorylation at Ser-403 by SIK1 represses activity possibly by inhibiting DNA-binding. SCAP-free SREBF1 is ubiquitinated by the BCR(ARMC5) complex, leading to its degradation. In terms of processing, ubiquitinated; the nuclear form has a rapid turnover and is rapidly ubiquitinated and degraded by the proteasome in the nucleus.

It is found in the endoplasmic reticulum membrane. The protein localises to the golgi apparatus membrane. It localises to the cytoplasmic vesicle. Its subcellular location is the COPII-coated vesicle membrane. The protein resides in the nucleus. Activation by cleavage is down-regulated upon activation of SIRT3-dependent PRKAA1/AMPK-alpha signaling cascade which leads to inhibition of ATP-consuming lipogenesis to restore cellular energy balance. In terms of biological role, precursor of the transcription factor form (Processed sterol regulatory element-binding protein 1), which is embedded in the endoplasmic reticulum membrane. Low sterol concentrations promote processing of this form, releasing the transcription factor form that translocates into the nucleus and activates transcription of genes involved in cholesterol biosynthesis and lipid homeostasis. Its function is as follows. Key transcription factor that regulates expression of genes involved in cholesterol biosynthesis and lipid homeostasis. Binds to the sterol regulatory element 1 (SRE-1) (5'-ATCACCCCAC-3'). Has dual sequence specificity binding to both an E-box motif (5'-ATCACGTGA-3') and to SRE-1 (5'-ATCACCCCAC-3'). Regulates the promoters of genes involved in cholesterol biosynthesis and the LDL receptor (LDLR) pathway of sterol regulation. This is Sterol regulatory element-binding protein 1 (SREBF1) from Sus scrofa (Pig).